The chain runs to 1416 residues: DNA-directed RNA polymerase subunit beta (1416 aa).

The disordered stretch occupies residues 1388–1416 (AKAAREQAEGELGGPLGTPRGAAAEKNTA).

Belongs to the RNA polymerase beta chain family. The RNAP catalytic core consists of 2 alpha, 1 beta, 1 beta' and 1 omega subunit. When a sigma factor is associated with the core the holoenzyme is formed, which can initiate transcription.

The catalysed reaction is RNA(n) + a ribonucleoside 5'-triphosphate = RNA(n+1) + diphosphate. Its function is as follows. DNA-dependent RNA polymerase catalyzes the transcription of DNA into RNA using the four ribonucleoside triphosphates as substrates. In Anaeromyxobacter sp. (strain Fw109-5), this protein is DNA-directed RNA polymerase subunit beta.